A 746-amino-acid polypeptide reads, in one-letter code: Ferrienterobactin receptor (746 aa).

The first 22 residues, 1 to 22 (MNKKIHSLALLVNLGIYGVAQA), serve as a signal peptide directing secretion. The TonB box motif lies at 34–41 (DTIVVTAA). The TBDR plug domain maps to 42–169 (EQNLQAPGVS…AGGVVNIITK (128 aa)). The segment at 76–96 (GVNLTGNSTSGQRGNNRQIDI) is disordered. The segment covering 79 to 93 (LTGNSTSGQRGNNRQ) has biased composition (polar residues). The TBDR beta-barrel domain maps to 174 to 746 (EWHGSWDAYF…TWYMSVNTHF (573 aa)). Positions 729-746 (YTYNEPGRTWYMSVNTHF) match the TonB C-terminal box motif.

The protein belongs to the TonB-dependent receptor family.

The protein resides in the cell outer membrane. Its function is as follows. This protein is involved in the initial step of iron uptake by binding ferrienterobactin (Fe-ENT), an iron chelatin siderophore that allows E.coli to extract iron from the environment. FepA also acts as a receptor for colicins B and D. The sequence is that of Ferrienterobactin receptor (fepA) from Escherichia coli (strain K12).